The primary structure comprises 491 residues: Glutamate--tRNA ligase (491 aa).

The short motif at 13-23 (PSPTGFLHIGN) is the 'HIGH' region element. C110, C112, C137, and H139 together coordinate Zn(2+). A 'KMSKS' region motif is present at residues 254 to 258 (KLSKR). Residue K257 coordinates ATP.

It belongs to the class-I aminoacyl-tRNA synthetase family. Glutamate--tRNA ligase type 1 subfamily. Monomer. It depends on Zn(2+) as a cofactor.

It localises to the cytoplasm. The catalysed reaction is tRNA(Glu) + L-glutamate + ATP = L-glutamyl-tRNA(Glu) + AMP + diphosphate. Functionally, catalyzes the attachment of glutamate to tRNA(Glu) in a two-step reaction: glutamate is first activated by ATP to form Glu-AMP and then transferred to the acceptor end of tRNA(Glu). This Listeria innocua serovar 6a (strain ATCC BAA-680 / CLIP 11262) protein is Glutamate--tRNA ligase.